Consider the following 406-residue polypeptide: Putative colanic acid biosynthesis glycosyltransferase WcaL (406 aa).

The protein belongs to the glycosyltransferase group 1 family. Glycosyltransferase 4 subfamily.

It participates in slime biogenesis; slime polysaccharide biosynthesis. The sequence is that of Putative colanic acid biosynthesis glycosyltransferase WcaL (wcaL) from Escherichia coli (strain K12).